A 485-amino-acid chain; its full sequence is Glutamate--tRNA ligase (485 aa).

The short motif at 11–21 is the 'HIGH' region element; the sequence is PSPTGHLHIGN. The 'KMSKS' region motif lies at 252–256; the sequence is KLSKR. Lys255 contributes to the ATP binding site.

It belongs to the class-I aminoacyl-tRNA synthetase family. Glutamate--tRNA ligase type 1 subfamily. As to quaternary structure, monomer.

It localises to the cytoplasm. It catalyses the reaction tRNA(Glu) + L-glutamate + ATP = L-glutamyl-tRNA(Glu) + AMP + diphosphate. Functionally, catalyzes the attachment of glutamate to tRNA(Glu) in a two-step reaction: glutamate is first activated by ATP to form Glu-AMP and then transferred to the acceptor end of tRNA(Glu). The protein is Glutamate--tRNA ligase of Bacillus cereus (strain ATCC 10987 / NRS 248).